A 202-amino-acid chain; its full sequence is Glycerol-3-phosphate acyltransferase (202 aa).

4 consecutive transmembrane segments (helical) span residues 2–22 (ANLL…AVVV), 85–105 (LAMV…HRFA), 119–139 (AINP…AFFF), and 158–178 (VLME…ILLI).

This sequence belongs to the PlsY family. As to quaternary structure, probably interacts with PlsX.

It localises to the cell inner membrane. The enzyme catalyses an acyl phosphate + sn-glycerol 3-phosphate = a 1-acyl-sn-glycero-3-phosphate + phosphate. It participates in lipid metabolism; phospholipid metabolism. Its function is as follows. Catalyzes the transfer of an acyl group from acyl-phosphate (acyl-PO(4)) to glycerol-3-phosphate (G3P) to form lysophosphatidic acid (LPA). This enzyme utilizes acyl-phosphate as fatty acyl donor, but not acyl-CoA or acyl-ACP. The sequence is that of Glycerol-3-phosphate acyltransferase from Cupriavidus pinatubonensis (strain JMP 134 / LMG 1197) (Cupriavidus necator (strain JMP 134)).